Consider the following 471-residue polypeptide: Ubiquitin carboxyl-terminal hydrolase 8 (471 aa).

Residues Cys-4, His-6, Cys-46, Cys-49, Cys-60, Cys-63, Cys-68, His-73, His-77, His-83, Cys-96, and Cys-99 each coordinate Zn(2+). The UBP-type; degenerate zinc finger occupies 22–122; the sequence is KTCNAARYIL…ILAKYWDDVC (101 aa). The 332-residue stretch at 137 to 468 folds into the USP domain; that stretch reads SGLINMGSTC…QAYLLFYTIR (332 aa). Catalysis depends on Cys-146, which acts as the Nucleophile. Positions 170, 174, 182, 185, 250, 271, 273, 276, 289, 292, 336, and 339 each coordinate Zn(2+). His-427 functions as the Proton acceptor in the catalytic mechanism.

It belongs to the peptidase C19 family. UBP8 subfamily. In terms of assembly, component of the 1.8 MDa SAGA (Spt-Ada-Gcn5 acetyltransferase) complex, which is composed of 19 subunits TRA1, SPT7, TAF5, NGG1/ADA3, SGF73, SPT20/ADA5, SPT8, TAF12, TAF6, HFI1/ADA1, UBP8, GCN5, ADA2, SPT3, SGF29, TAF10, TAF9, SGF11 and SUS1. The SAGA complex is composed of 4 modules, namely the HAT (histone acetyltransferase) module (GCN5, ADA2, NGG1/ADA3 and SGF29), the DUB (deubiquitinating) module (UBP8, SGF11, SGF73 and SUS1), the core or TAF (TBP-associated factor) module (TAF5, TAF6, TAF9, TAF10 and TAF12), and the Tra1 or SPT (Suppressor of Ty) module (TRA1, HFI1/ADA1, SPT3, SPT7, SPT8 and SPT20/ADA5). The Tra1/SPT module binds activators, the core module recruits TBP (TATA-binding protein), the HAT module contains the histone H3 acetyltransferase GCN5, and the DUB module comprises the histone H2B deubiquitinase UBP8. Also identified in an altered form of SAGA, named SALSA (SAGA altered, Spt8 absent) or SLIK (SAGA-like) complex, which contains a C-terminal truncated form of SPT7 and is missing SPT8. However, it has been shown that the SAGA and SAGA-like SALSA/SLIK transcriptional coactivators are structurally and biochemically equivalent.

It is found in the nucleus. It carries out the reaction Thiol-dependent hydrolysis of ester, thioester, amide, peptide and isopeptide bonds formed by the C-terminal Gly of ubiquitin (a 76-residue protein attached to proteins as an intracellular targeting signal).. Its function is as follows. Histone deubiquitinating enzyme component of the transcription coactivator SAGA complex. SAGA acts as a general cofactor required for essentially all RNA polymerase II transcription. At the promoters, SAGA is required for transcription pre-initiation complex (PIC) recruitment. It influences RNA polymerase II transcriptional activity through different activities such as TBP interaction (via core/TAF module) and promoter selectivity, interaction with transcription activators (via Tra1/SPT module), and chromatin modification through histone acetylation (via HAT module) and deubiquitination (via DUB module). SAGA preferentially acetylates histones H3 (to form H3K9ac, H3K14ac, H3K18ac and H3K23ac) and H2B and deubiquitinates histone H2B. SAGA interacts with DNA via upstream activating sequences (UASs). Also identified in a modified version of SAGA named SALSA or SLIK. The cleavage of SPT7 and the absence of the SPT8 subunit in SLIK neither drive any major conformational differences in its structure compared with SAGA, nor significantly affect HAT, DUB, or DNA-binding activities. Within the DUB module, the correctly positioned zinc finger domains of SGF11 and SGF73 are both required to fully activate the ubiquitin hydrolase UBP8. The DUB module is also linked to the splicing efficiency of many transcripts. This is Ubiquitin carboxyl-terminal hydrolase 8 (UBP8) from Saccharomyces cerevisiae (strain ATCC 204508 / S288c) (Baker's yeast).